Consider the following 154-residue polypeptide: UPF0547 protein C16orf87 homolog (154 aa).

Residues 43–119 are disordered; the sequence is NAKHSEKSPP…KHEEEREKQE (77 aa). Basic and acidic residues predominate over residues 68–84; sequence VRREKINSTVNKDLENR. A Phosphoserine modification is found at Ser-91. Residues 104–132 are a coiled coil; the sequence is KSSSAKKHEEEREKQEKEIDIYANLSDEK. A compositionally biased stretch (basic and acidic residues) spans 109 to 119; it reads KKHEEEREKQE.

Belongs to the UPF0547 family.

The protein is UPF0547 protein C16orf87 homolog of Mus musculus (Mouse).